Consider the following 220-residue polypeptide: Meiotic nuclear division protein 1 homolog (220 aa).

Positions 76–147 form a coiled coil; sequence SKALHARKRR…KVEIEKYQEC (72 aa).

The protein belongs to the MND1 family.

Its subcellular location is the nucleus. In terms of biological role, required for proper homologous chromosome pairing and efficient cross-over and intragenic recombination during meiosis. Stimulates both DMC1- and RAD51-mediated homologous strand assimilation, which is required for the resolution of meiotic double-strand breaks. This Danio rerio (Zebrafish) protein is Meiotic nuclear division protein 1 homolog.